A 63-amino-acid chain; its full sequence is Large ribosomal subunit protein uL30 (63 aa).

It belongs to the universal ribosomal protein uL30 family. In terms of assembly, part of the 50S ribosomal subunit.

The sequence is that of Large ribosomal subunit protein uL30 from Bradyrhizobium sp. (strain BTAi1 / ATCC BAA-1182).